The following is a 165-amino-acid chain: MSKITLAGTEIEVSGVFPQVGDVVTDFTTVSAKLEDTTLANFAGKRKILNIFPSIDTGICATSVRKFNEQAAKLANTAVLCLSTDLPFAQARFCGAEGLENVFTVSTFRNKDVHKQLGVDIVEGPLAGLTARAVIVLDENNRVLHSELVPEIKQEPNYDAALAVL.

The Thioredoxin domain occupies 18–165 (PQVGDVVTDF…PNYDAALAVL (148 aa)). Cysteine 60 (cysteine sulfenic acid (-SOH) intermediate) is an active-site residue. The cysteines at positions 60 and 94 are disulfide-linked.

This sequence belongs to the peroxiredoxin family. Tpx subfamily. In terms of assembly, homodimer.

It catalyses the reaction a hydroperoxide + [thioredoxin]-dithiol = an alcohol + [thioredoxin]-disulfide + H2O. Functionally, thiol-specific peroxidase that catalyzes the reduction of hydrogen peroxide and organic hydroperoxides to water and alcohols, respectively. Plays a role in cell protection against oxidative stress by detoxifying peroxides. This chain is Thiol peroxidase, found in Pasteurella multocida (strain Pm70).